Here is a 433-residue protein sequence, read N- to C-terminus: Serine--tRNA ligase (433 aa).

Residue 235–237 (TSE) participates in L-serine binding. 266–268 (RSE) is a binding site for ATP. Glu-289 contributes to the L-serine binding site. ATP is bound at residue 353–356 (EISS). Residue Ser-388 coordinates L-serine.

Belongs to the class-II aminoacyl-tRNA synthetase family. Type-1 seryl-tRNA synthetase subfamily. In terms of assembly, homodimer. The tRNA molecule binds across the dimer.

The protein resides in the cytoplasm. The catalysed reaction is tRNA(Ser) + L-serine + ATP = L-seryl-tRNA(Ser) + AMP + diphosphate + H(+). It carries out the reaction tRNA(Sec) + L-serine + ATP = L-seryl-tRNA(Sec) + AMP + diphosphate + H(+). It functions in the pathway aminoacyl-tRNA biosynthesis; selenocysteinyl-tRNA(Sec) biosynthesis; L-seryl-tRNA(Sec) from L-serine and tRNA(Sec): step 1/1. In terms of biological role, catalyzes the attachment of serine to tRNA(Ser). Is also able to aminoacylate tRNA(Sec) with serine, to form the misacylated tRNA L-seryl-tRNA(Sec), which will be further converted into selenocysteinyl-tRNA(Sec). The protein is Serine--tRNA ligase of Burkholderia vietnamiensis (strain G4 / LMG 22486) (Burkholderia cepacia (strain R1808)).